A 296-amino-acid chain; its full sequence is 33 kDa chaperonin (296 aa).

Intrachain disulfides connect C236/C238 and C269/C272.

The protein belongs to the HSP33 family. In terms of processing, under oxidizing conditions two disulfide bonds are formed involving the reactive cysteines. Under reducing conditions zinc is bound to the reactive cysteines and the protein is inactive.

It is found in the cytoplasm. Redox regulated molecular chaperone. Protects both thermally unfolding and oxidatively damaged proteins from irreversible aggregation. Plays an important role in the bacterial defense system toward oxidative stress. This Lactobacillus acidophilus (strain ATCC 700396 / NCK56 / N2 / NCFM) protein is 33 kDa chaperonin.